Here is a 330-residue protein sequence, read N- to C-terminus: Taste receptor type 2 member 117 (330 aa).

The Extracellular segment spans residues 1 to 16 (MKHFWKILSVISQSTL). A helical membrane pass occupies residues 17–37 (SVILIVELVIGIIGNGFMVLV). The Cytoplasmic portion of the chain corresponds to 38–53 (HCMDWVKKKKMSLVNQ). Residues 54 to 74 (ILTALSISRIFQLCLLFISLV) form a helical membrane-spanning segment. The Extracellular portion of the chain corresponds to 75–95 (INFSYTDLTTSSRMIQVMYNA). The N-linked (GlcNAc...) asparagine glycan is linked to Asn76. A helical membrane pass occupies residues 96-116 (WILANHFSIWIATCLTVLYFL). Residues 117 to 135 (KIANFSNSFFLYLKWRVEK) are Cytoplasmic-facing. A helical membrane pass occupies residues 136-156 (VVSVTLLVSLLLLILNILLTN). Residues 157 to 190 (LETDMWTNEYQRNISCSFSSHYYAKCHRQVLRLH) lie on the Extracellular side of the membrane. N-linked (GlcNAc...) asparagine glycosylation is present at Asn169. A helical membrane pass occupies residues 191-211 (IIFLSVPVVLSLSTFLLLIFS). At 212–239 (LWTHHKRMQQHVQGGRDARTTAHFKALQ) the chain is on the cytoplasmic side. Residues 240–260 (TVIAFFLLYSIFILSVLIQIW) form a helical membrane-spanning segment. The Extracellular segment spans residues 261–269 (KYELLKKNL). The chain crosses the membrane as a helical span at residues 270 to 290 (FVVFCEVVYIAFPTFHSYILI). Residues 291 to 330 (VGDMKLRQACLPLCIIAAEIQTTLCRNFRSLKYFRLCCIF) lie on the Cytoplasmic side of the membrane.

This sequence belongs to the G-protein coupled receptor T2R family.

The protein resides in the membrane. Putative taste receptor which may play a role in the perception of bitterness. The polypeptide is Taste receptor type 2 member 117 (Mus musculus (Mouse)).